Reading from the N-terminus, the 1843-residue chain is Zinc finger protein 142 (1843 aa).

2 consecutive C2H2-type zinc fingers follow at residues 103–127 (YFCERCEQSFAEPTLLSVHQCTETH) and 164–186 (LPCPVCRQEFVQPQALKSHFKIH). The interval 294–357 (PAAKLPPGHR…LEGHVGSGTE (64 aa)) is disordered. Positions 318–329 (SAEEEDAEEEES) are enriched in acidic residues. A compositionally biased stretch (basic and acidic residues) spans 330-340 (VTQKDSQKVMD). Residue Ser-354 is modified to Phosphoserine. The segment at 363 to 385 (HMCPECKRCFKKRTHLVEHLHLH) adopts a C2H2-type 3 zinc-finger fold. Residues 391–413 (LQCPNCQKFFTSKSKLKTHLLRE) form a C2H2-type 4; degenerate zinc finger. 7 consecutive C2H2-type zinc fingers follow at residues 453 to 475 (YACPVCREEFRLSQALKEHLKSH), 543 to 566 (FHCPHCDFACSNKHLFRKHKKQGH), 601 to 623 (HQCSECNFATAHKRVLIRHMLLH), 629 to 651 (HKCELCDFTCRDVSYLSKHMLTH), 657 to 679 (YMCTECGYVTKWKHYLSVHMRKH), 685 to 707 (YQCNQCSYRCHRADQLSSHKLRH), and 744 to 767 (YPCRYCSYQSRHKQALLSHENCKH). A Glycyl lysine isopeptide (Lys-Gly) (interchain with G-Cter in SUMO2) cross-link involves residue Lys-794. Disordered stretches follow at residues 819–888 (QCLA…LGEV) and 1103–1177 (PKPV…TGTS). Residues 837–846 (PEREDREHEI) are compositionally biased toward basic and acidic residues. Residues 1157–1167 (LPTPSDFPTSP) show a composition bias toward pro residues. A compositionally biased stretch (polar residues) spans 1168–1177 (PENSLPTGTS). 9 consecutive C2H2-type zinc fingers follow at residues 1331–1354 (LQCGDCGFTCKQSRCLQQHRRLKH), 1388–1411 (IPCSSCPQTFGTNSKLRLHQLRVH), 1446–1469 (FSCTQCEAQFSSETALKQHALRRH), 1514–1537 (LECGACQESFPNRPALDEHRRQHH), 1608–1630 (YKCTDCAYSTKNRQKITWHSRIH), 1636–1658 (YHCHLCAYACADPSRLKYHMRIH), 1664–1686 (YLCPECGYKCKWVNQLKYHMTKH), 1692–1715 (YQCPECEYCTNRADALRVHRETRH), and 1721–1743 (FMCEQCGKAFKTRFLLRTHLRKH). Residues Lys-1353 and Lys-1402 each participate in a glycyl lysine isopeptide (Lys-Gly) (interchain with G-Cter in SUMO2) cross-link. Residue Lys-1747 forms a Glycyl lysine isopeptide (Lys-Gly) (interchain with G-Cter in SUMO2) linkage. The C2H2-type 21 zinc finger occupies 1749–1771 (YVCNVCHRAFRWAAGLRHHALTH). The disordered stretch occupies residues 1795–1843 (HVRRHHPDQADPNQGVGKDPTTPTVHLHDVKLEDPSPPAPPAPSTGPEG). A compositionally biased stretch (pro residues) spans 1829-1843 (PSPPAPPAPSTGPEG).

Belongs to the krueppel C2H2-type zinc-finger protein family.

Its subcellular location is the nucleus. Functionally, may be involved in transcriptional regulation. In Mus musculus (Mouse), this protein is Zinc finger protein 142.